The chain runs to 297 residues: Formamidopyrimidine-DNA glycosylase (297 aa).

Pro-2 (schiff-base intermediate with DNA) is an active-site residue. Glu-3 (proton donor) is an active-site residue. Lys-58 acts as the Proton donor; for beta-elimination activity in catalysis. Residues His-106, Arg-125, and Arg-168 each coordinate DNA. Residues Arg-259 to Pro-295 form an FPG-type zinc finger. Catalysis depends on Arg-285, which acts as the Proton donor; for delta-elimination activity.

Belongs to the FPG family. As to quaternary structure, monomer. It depends on Zn(2+) as a cofactor.

It catalyses the reaction Hydrolysis of DNA containing ring-opened 7-methylguanine residues, releasing 2,6-diamino-4-hydroxy-5-(N-methyl)formamidopyrimidine.. The catalysed reaction is 2'-deoxyribonucleotide-(2'-deoxyribose 5'-phosphate)-2'-deoxyribonucleotide-DNA = a 3'-end 2'-deoxyribonucleotide-(2,3-dehydro-2,3-deoxyribose 5'-phosphate)-DNA + a 5'-end 5'-phospho-2'-deoxyribonucleoside-DNA + H(+). Involved in base excision repair of DNA damaged by oxidation or by mutagenic agents. Acts as a DNA glycosylase that recognizes and removes damaged bases. Has a preference for oxidized purines, such as 7,8-dihydro-8-oxoguanine (8-oxoG). Has AP (apurinic/apyrimidinic) lyase activity and introduces nicks in the DNA strand. Cleaves the DNA backbone by beta-delta elimination to generate a single-strand break at the site of the removed base with both 3'- and 5'-phosphates. The protein is Formamidopyrimidine-DNA glycosylase of Methylobacterium sp. (strain 4-46).